The chain runs to 580 residues: PTS system fructose-specific EIIB'BC component (580 aa).

2 consecutive PTS EIIB type-2 domains span residues Met3 to Glu100 and Lys124 to Ala221. Active-site phosphocysteine intermediate; for EIIB activity residues include Cys11 and Cys132. Phosphocysteine; by EIIA is present on residues Cys11 and Cys132. Positions Val244–Ala579 constitute a PTS EIIC type-2 domain. Helical transmembrane passes span His254–Ile274, Gly292–Ala312, Ile322–Phe342, Ile367–Gly387, Asn408–Val428, Met448–Ile468, Ala480–Ala500, Val507–Ala527, and Phe537–Val557.

It is found in the cell inner membrane. The enzyme catalyses D-fructose(out) + N(pros)-phospho-L-histidyl-[protein] = D-fructose 1-phosphate(in) + L-histidyl-[protein]. Functionally, the phosphoenolpyruvate-dependent sugar phosphotransferase system (sugar PTS), a major carbohydrate active transport system, catalyzes the phosphorylation of incoming sugar substrates concomitantly with their translocation across the cell membrane. The enzyme II FruAB PTS system is involved in fructose transport. The polypeptide is PTS system fructose-specific EIIB'BC component (Vibrio cholerae serotype O1 (strain ATCC 39315 / El Tor Inaba N16961)).